A 195-amino-acid chain; its full sequence is MPEEGRPCPWVRWSGTAFQRQWPWLLLVVFITVFCCWFHCSGLLSKQQQRLLEHPEPHTAELQLNLTVPRKDPTLRWGAGPALGRSFTHGPELEEGHLRIHQDGLYRLHIQVTLANCSSPGSTLQHRATLAVGICSPAAHGISLLRGRFGQDCTVALQRLTYLVHGDVLCTNLTLPLLPSRNADETFFGVQWICP.

The Cytoplasmic segment spans residues 1 to 23 (MPEEGRPCPWVRWSGTAFQRQWP). The helical; Signal-anchor for type II membrane protein transmembrane segment at 24-44 (WLLLVVFITVFCCWFHCSGLL) threads the bilayer. Residues 45-195 (SKQQQRLLEH…TFFGVQWICP (151 aa)) lie on the Extracellular side of the membrane. The region spanning 58-193 (HTAELQLNLT…DETFFGVQWI (136 aa)) is the THD domain. N-linked (GlcNAc...) asparagine glycosylation is found at N65 and N116. 2 disulfides stabilise this stretch: C117–C153 and C135–C170. An N-linked (GlcNAc...) asparagine glycan is attached at N172.

The protein belongs to the tumor necrosis factor family. As to quaternary structure, homotrimer. N-glycosylated. As to expression, very low level of expression. Detected in splenocytes and thymocytes.

It localises to the cell membrane. Functionally, expressed at the plasma membrane of B cells, it is the ligand of the CD27 receptor which is specifically expressed at the surface of T cells. The CD70-CD27 signaling pathway mediates antigen-specific T cell activation and expansion which in turn provides immune surveillance of B cells. The sequence is that of CD70 antigen from Mus musculus (Mouse).